The chain runs to 207 residues: Thymidylate kinase (207 aa).

12 to 19 is an ATP binding site; the sequence is GVDGAGKS.

This sequence belongs to the thymidylate kinase family.

The enzyme catalyses dTMP + ATP = dTDP + ADP. Phosphorylation of dTMP to form dTDP in both de novo and salvage pathways of dTTP synthesis. This chain is Thymidylate kinase, found in Bordetella petrii (strain ATCC BAA-461 / DSM 12804 / CCUG 43448).